Reading from the N-terminus, the 473-residue chain is MAQHDFAPAWLNFPTPPSSTKSSLNFEKHSENFAWTENRYDVNRRRHNSSDGFDSAIGRPNGGNFGRKEKNGWRTHGRNGTENINHRGGYHGGSSRSRSSIFHAGKSQGLHENNIPDNETGRKEDKRERKQFEAEDFPSLNPEYEREPNHNKSLAAGVWEYPPNPKSRAPRMLVIKKGNTKDLQLSGFPVVGNLPSQPVKNGTGPSVYKGLVPKPAAPPTKPTQWKSQTKENKVGTSFPHESTFGVGNFNAFKSTAKNFSPSTNSVKECNRSNSSSPVDKLNQQPRLTKLTRMRTDKKSEFLKALKRDRVEEEHEDESRAGSEKDDDSFNLHNSNSTHQERDINRNFDENEIPQENGNASVISQQIIRSSTFPQTDVLSSSLEAEHRLLKEMGWQEDSENDETCAPLTEDEMREFQVISEQLQKNGLRKNGILKNGLICDFKFGPWKNSTFKPTTENDDTETSSSDTSDDDDV.

Disordered regions lie at residues 1-25 (MAQHDFAPAWLNFPTPPSSTKSSLN), 46-149 (RHNS…REPN), and 191-342 (VGNL…QERD). Ser-49 carries the post-translational modification Phosphoserine. An Omega-N-methylarginine modification is found at Arg-87. A compositionally biased stretch (basic and acidic residues) spans 119–133 (ETGRKEDKRERKQFE). Composition is skewed to polar residues over residues 194 to 204 (LPSQPVKNGTG) and 251 to 286 (AFKSTAKNFSPSTNSVKECNRSNSSSPVDKLNQQPR). Phosphoserine is present on residues Ser-274, Ser-276, Ser-322, and Ser-381. The span at 293-329 (MRTDKKSEFLKALKRDRVEEEHEDESRAGSEKDDDSF) shows a compositional bias: basic and acidic residues. The interval 444–473 (GPWKNSTFKPTTENDDTETSSSDTSDDDDV) is disordered. A compositionally biased stretch (acidic residues) spans 456–473 (ENDDTETSSSDTSDDDDV).

It belongs to the vasculin family. As to quaternary structure, interacts with GTF2B, GTF2F2, RNA polymerase II and TBP. In terms of tissue distribution, widely expressed. Some isoforms may be specifically expressed in veins and arteries (at protein level). Isoform 4 is widely expressed. Isoform 1, isoform 2 and isoform 3 may be specifically expressed in vascular smooth muscle cells.

The protein resides in the nucleus. It localises to the cytoplasm. Its function is as follows. Functions as a GC-rich promoter-specific transactivating transcription factor. The polypeptide is Vasculin (GPBP1) (Homo sapiens (Human)).